Here is a 481-residue protein sequence, read N- to C-terminus: tRNA sulfurtransferase (481 aa).

The 103-residue stretch at 54 to 156 folds into the THUMP domain; it reads ADGDGPLRHI…GKDVFFYHEI (103 aa). ATP-binding positions include 174–175, Lys256, Gly278, and Gln287; that span reads LV. Cys334 and Cys433 are oxidised to a cystine. The region spanning 388–463 is the Rhodanese domain; the sequence is IPKDAVIIDL…YYSTFSDLKK (76 aa). Cys433 (cysteine persulfide intermediate) is an active-site residue.

The protein belongs to the ThiI family.

The protein resides in the cytoplasm. It catalyses the reaction [ThiI sulfur-carrier protein]-S-sulfanyl-L-cysteine + a uridine in tRNA + 2 reduced [2Fe-2S]-[ferredoxin] + ATP + H(+) = [ThiI sulfur-carrier protein]-L-cysteine + a 4-thiouridine in tRNA + 2 oxidized [2Fe-2S]-[ferredoxin] + AMP + diphosphate. The enzyme catalyses [ThiS sulfur-carrier protein]-C-terminal Gly-Gly-AMP + S-sulfanyl-L-cysteinyl-[cysteine desulfurase] + AH2 = [ThiS sulfur-carrier protein]-C-terminal-Gly-aminoethanethioate + L-cysteinyl-[cysteine desulfurase] + A + AMP + 2 H(+). It functions in the pathway cofactor biosynthesis; thiamine diphosphate biosynthesis. Functionally, catalyzes the ATP-dependent transfer of a sulfur to tRNA to produce 4-thiouridine in position 8 of tRNAs, which functions as a near-UV photosensor. Also catalyzes the transfer of sulfur to the sulfur carrier protein ThiS, forming ThiS-thiocarboxylate. This is a step in the synthesis of thiazole, in the thiamine biosynthesis pathway. The sulfur is donated as persulfide by IscS. This is tRNA sulfurtransferase from Thermoplasma acidophilum (strain ATCC 25905 / DSM 1728 / JCM 9062 / NBRC 15155 / AMRC-C165).